A 270-amino-acid polypeptide reads, in one-letter code: tRNA pseudouridine synthase A (270 aa).

The Nucleophile role is filled by D60. A substrate-binding site is contributed by Y118.

The protein belongs to the tRNA pseudouridine synthase TruA family. Homodimer.

The catalysed reaction is uridine(38/39/40) in tRNA = pseudouridine(38/39/40) in tRNA. Formation of pseudouridine at positions 38, 39 and 40 in the anticodon stem and loop of transfer RNAs. The polypeptide is tRNA pseudouridine synthase A (Salmonella agona (strain SL483)).